The chain runs to 367 residues: Biotin--protein ligase 1, chloroplastic (367 aa).

The transit peptide at 1–37 (MEAVRSTTTLSNFHLLNILVLRSLKPLHRLSFSFSAS) directs the protein to the chloroplast. One can recognise a BPL/LPL catalytic domain in the interval 105–289 (IITHRFGRFL…KFEKFFDLFM (185 aa)). Residues 122-124 (STH), Gln-145, 149-151 (RGR), and Lys-220 contribute to the biotin site.

Belongs to the biotin--protein ligase family. As to expression, expressed in roots, leaves, stems, flowers, siliques and seeds.

It localises to the plastid. Its subcellular location is the chloroplast. The protein localises to the cytoplasm. The protein resides in the cytosol. It catalyses the reaction apo-[3-methylcrotonoyl-CoA:carbon-dioxide ligase (ADP-forming)] + biotin + ATP = holo-[3-methylcrotonoyl-CoA:carbon-dioxide ligase (ADP-forming)] + AMP + diphosphate + H(+). The enzyme catalyses biotin + L-lysyl-[protein] + ATP = N(6)-biotinyl-L-lysyl-[protein] + AMP + diphosphate + H(+). Plays a major role in biotin-dependent carboxylase biotinylation. Catalyzes the addition of biotin to the biotin carboxyl carrier protein (BCCP) subunit of acetyl-CoA carboxylase. Can also biotinylate methylcrotonyl-CoA carboxylase. Is responsible for most, if not all, biotin--protein ligase activity in Arabidopsis. Is essential for plant viability and required for ovule development. In Arabidopsis thaliana (Mouse-ear cress), this protein is Biotin--protein ligase 1, chloroplastic.